Here is a 1281-residue protein sequence, read N- to C-terminus: MAQSRRHMSSRTPSGSRMSTEASARPLRVGSRVEVIGKGHRGTVAYVGATLFATGKWVGVILDEAKGKNDGTVQGRKYFTCDEGHGIFVRQSQIQVFEDGADTTSPETPDSSASKVLKREGADAAAKTSKLRGLKPKKAPTARKTTTRRPKPTRPASTGVAGPSSSLGPSGSASAGELSSSEPSTPAQTPLAAPIIPTPALTSPGAAPPLPSPSKEEEGLRAQVRDLEEKLETLRLKRSEDKAKLKELEKHKIQLEQVQEWKSKMQEQQADLQRRLKEARKEAKEALEAKERYMEEMADTADAIEMATLDKEMAEERAESLQQEVEALKERVDELTTDLEILKAEIEEKGSDGAASSYQLKQLEEQNARLKDALVRMRDLSSSEKQEHVKLQKLMEKKNQELEVVRQQRERLQEELSQAESTIDELKEQVDAALGAEEMVEMLTDRNLNLEEKVRELRETVGDLEAMNEMNDELQENARETELELREQLDMAGARVREAQKRVEAAQETVADYQQTIKKYRQLTAHLQDVNRELTNQQEASVERQQQPPPETFDFKIKFAETKAHAKAIEMELRQMEVAQANRHMSLLTAFMPDSFLRPGGDHDCVLVLLLMPRLICKAELIRKQAQEKFDLSENCSERPGLRGAAGEQLSFAAGLVYSLSLLQATLHRYEHALSQCSVDVYKKVGSLYPEMSAHERSLDFLIELLHKDQLDETVNVEPLTKAIKYYQHLYSIHLAEQPEDSTMQLADHIKFTQSALDCMGVEVGRLRAFLQGGQEATDIALLLRDLETSCSDTRQFCKKIRRRMPGTDAPGIPAALAFGSQVSDTLLDCRKHLTWVVAVLQEVAAAAAQLIAPLAENEGLPVAALEELAFKASEQIYGSPSSSPYECLRQSCTILISTMNKLATAMQEGEYDAERPPSKPPPVELRAAALRAEITDAEGLGLKLEDRETVIKELKKSLKIKGEELSEANVRLSLLEKKLDSAAKDADERIEKVQTRLDETQTLLRKKEKDFEETMDALQADIDQLEAEKAELKQRLNSQSKRTIEGLRGPPPSGIATLVSGIAGEEPQRGGAPGQAPGALPGPGLVKDSPLLLQQISAMRLHISQLQHENSILRGAQMKASLAALPPLHVAKLSLPPHEGPGGNLVAGALYRKTSQLLEKLNQLSTHTHVVDITRSSPAAKSPSAQLMEQVAQLKSLSDTIEKLKDEVLKETVTQRPGATVPTDFATFPSSAFLRAKEEQQDDTVYMGKVTFSCAAGLGQRHRLVLTQEQLHQLHSRLIS.

The tract at residues 1–26 (MAQSRRHMSSRTPSGSRMSTEASARP) is disordered. A compositionally biased stretch (polar residues) spans 10-22 (SRTPSGSRMSTEA). The 43-residue stretch at 48–90 (GATLFATGKWVGVILDEAKGKNDGTVQGRKYFTCDEGHGIFVR) folds into the CAP-Gly domain. Residues 100–221 (GADTTSPETP…SPSKEEEGLR (122 aa)) are disordered. Over residues 102 to 114 (DTTSPETPDSSAS) the composition is skewed to polar residues. Phosphothreonine is present on residues Thr-108, Thr-145, Thr-146, and Thr-147. The span at 129-152 (SKLRGLKPKKAPTARKTTTRRPKP) shows a compositional bias: basic residues. Residues 161–205 (AGPSSSLGPSGSASAGELSSSEPSTPAQTPLAAPIIPTPALTSPG) show a composition bias toward low complexity. Phosphoserine; by PLK1 is present on Ser-179. Ser-212 bears the Phosphoserine; by CDK1 mark. Coiled coils occupy residues 214-547 (SKEE…RQQQ), 943-1049 (LKLE…EGLR), and 1185-1214 (SAQL…KETV). Positions 911-1281 (EYDAERPPSK…LHQLHSRLIS (371 aa)) are interaction with HPS6.

Belongs to the dynactin 150 kDa subunit family. As to quaternary structure, monomer and homodimer. Subunit of dynactin, a multiprotein complex part of a tripartite complex with dynein and a adapter, such as BICDL1, BICD2 or HOOK3. The dynactin complex is built around ACTR1A/ACTB filament and consists of an actin-related filament composed of a shoulder domain, a pointed end and a barbed end. Its length is defined by its flexible shoulder domain. The soulder is composed of 2 DCTN1 subunits, 4 DCTN2 and 2 DCTN3. DCTN1/p150(glued) binds directly to microtubules and to cytoplasmic dynein. The 4 DCNT2 (via N-terminus) bind the ACTR1A filament and act as molecular rulers to determine the length. The pointed end is important for binding dynein-dynactin cargo adapters. Consists of 4 subunits: ACTR10, DCNT4, DCTN5 and DCTN6. The barbed end is composed of a CAPZA1:CAPZB heterodimers, which binds ACTR1A/ACTB filament and dynactin and stabilizes dynactin. Interacts with the C-terminus of MAPRE1, MAPRE2 and MAPRE3. Interacts with FBXL5. Interacts with ECPAS. Interacts with CLIP1. Interacts with CLN3 and DYNAP. Interacts with MISP; this interaction regulates its distribution at the cell cortex. Interacts with CEP131. Interacts with CEP126. Interacts with dynein intermediate chain and dynein heavy chain. Interacts with PLK1 (via POLO-box domain). Interacts with TBCB and PARD6A. Binds preferentially to tyrosinated microtubules than to detyrosinated microtubules. Interacts with KIF3A. Interacts with HPS6. Interacts with SNX6. Interacts with BICD2. Interacts with DST (isoform 1). Identified in a complex with MREG and RILP. Interacts with BCCIP. Interacts with DCDC1. Interacts with AKNA. Interacts with DYNC1I2. Interacts with RUFY3 and RUFY4. In terms of processing, ubiquitinated by a SCF complex containing FBXL5, leading to its degradation by the proteasome. Post-translationally, phosphorylation by SLK at Thr-145, Thr-146 and Thr-147 targets DCTN1 to the centrosome. It is uncertain if SLK phosphorylates all three threonines or one or two of them. PLK1-mediated phosphorylation at Ser-179 is essential for its localization in the nuclear envelope and promotes its dissociation from microtubules during early mitosis and positively regulates nuclear envelope breakdown during prophase.

It is found in the cytoplasm. The protein resides in the cytoskeleton. It localises to the microtubule organizing center. The protein localises to the centrosome. Its subcellular location is the centriole. It is found in the spindle. The protein resides in the nucleus envelope. It localises to the cell cortex. In terms of biological role, part of the dynactin complex that activates the molecular motor dynein for ultra-processive transport along microtubules. Plays a key role in dynein-mediated retrograde transport of vesicles and organelles along microtubules by recruiting and tethering dynein to microtubules. Binds to both dynein and microtubules providing a link between specific cargos, microtubules and dynein. Essential for targeting dynein to microtubule plus ends, recruiting dynein to membranous cargos and enhancing dynein processivity (the ability to move along a microtubule for a long distance without falling off the track). Can also act as a brake to slow the dynein motor during motility along the microtubule. Can regulate microtubule stability by promoting microtubule formation, nucleation and polymerization and by inhibiting microtubule catastrophe in neurons. Inhibits microtubule catastrophe by binding both to microtubules and to tubulin, leading to enhanced microtubule stability along the axon. Plays a role in metaphase spindle orientation. Plays a role in centriole cohesion and subdistal appendage organization and function. Its recruitment to the centriole in a KIF3A-dependent manner is essential for the maintenance of centriole cohesion and the formation of subdistal appendage. Also required for microtubule anchoring at the mother centriole. Plays a role in primary cilia formation. This is Dynactin subunit 1 (Dctn1) from Mus musculus (Mouse).